An 82-amino-acid chain; its full sequence is Short neurotoxin OKI-10 (82 aa).

A signal peptide spans 1-20 (KTLLLTLVVVTIVCLDLGYT). 4 cysteine pairs are disulfide-bonded: cysteine 23/cysteine 44, cysteine 37/cysteine 61, cysteine 63/cysteine 74, and cysteine 75/cysteine 80.

The protein belongs to the three-finger toxin family. Short-chain subfamily. Type I alpha-neurotoxin sub-subfamily. In terms of tissue distribution, expressed by the venom gland.

The protein resides in the secreted. Functionally, binds to muscle nicotinic acetylcholine receptor (nAChR) and inhibit acetylcholine from binding to the receptor, thereby impairing neuromuscular transmission. This is Short neurotoxin OKI-10 from Laticauda laticaudata (Blue-ringed sea krait).